The chain runs to 142 residues: Putative pterin-4-alpha-carbinolamine dehydratase (142 aa).

It belongs to the pterin-4-alpha-carbinolamine dehydratase family.

It carries out the reaction (4aS,6R)-4a-hydroxy-L-erythro-5,6,7,8-tetrahydrobiopterin = (6R)-L-erythro-6,7-dihydrobiopterin + H2O. This Caenorhabditis elegans protein is Putative pterin-4-alpha-carbinolamine dehydratase (pcbd-1).